Consider the following 923-residue polypeptide: Meiotic recombination protein rec11 (923 aa).

In terms of domain architecture, SCD spans Leu278 to Ile365.

This Schizosaccharomyces pombe (strain 972 / ATCC 24843) (Fission yeast) protein is Meiotic recombination protein rec11 (rec11).